Here is a 223-residue protein sequence, read N- to C-terminus: NAD(P)H-hydrate epimerase (223 aa).

The YjeF N-terminal domain maps to 9 to 211 (AIKLDEELMG…ELKDKLHLIL (203 aa)). 60-64 (NNGGD) serves as a coordination point for (6S)-NADPHX. K(+)-binding residues include asparagine 61 and aspartate 120. (6S)-NADPHX-binding positions include 124–130 (GFSFKGP) and aspartate 153. K(+) is bound at residue serine 156.

Belongs to the NnrE/AIBP family. It depends on K(+) as a cofactor.

It catalyses the reaction (6R)-NADHX = (6S)-NADHX. The enzyme catalyses (6R)-NADPHX = (6S)-NADPHX. Catalyzes the epimerization of the S- and R-forms of NAD(P)HX, a damaged form of NAD(P)H that is a result of enzymatic or heat-dependent hydration. This is a prerequisite for the S-specific NAD(P)H-hydrate dehydratase to allow the repair of both epimers of NAD(P)HX. This Entamoeba histolytica (strain ATCC 30459 / HM-1:IMSS / ABRM) protein is NAD(P)H-hydrate epimerase.